The primary structure comprises 493 residues: Glutamyl-tRNA(Gln) amidotransferase subunit A (493 aa).

Active-site charge relay system residues include lysine 79 and serine 159. Serine 183 acts as the Acyl-ester intermediate in catalysis.

The protein belongs to the amidase family. GatA subfamily. Heterotrimer of A, B and C subunits.

It carries out the reaction L-glutamyl-tRNA(Gln) + L-glutamine + ATP + H2O = L-glutaminyl-tRNA(Gln) + L-glutamate + ADP + phosphate + H(+). Its function is as follows. Allows the formation of correctly charged Gln-tRNA(Gln) through the transamidation of misacylated Glu-tRNA(Gln) in organisms which lack glutaminyl-tRNA synthetase. The reaction takes place in the presence of glutamine and ATP through an activated gamma-phospho-Glu-tRNA(Gln). The sequence is that of Glutamyl-tRNA(Gln) amidotransferase subunit A from Chelativorans sp. (strain BNC1).